The chain runs to 346 residues: Holliday junction branch migration complex subunit RuvB (346 aa).

The large ATPase domain (RuvB-L) stretch occupies residues 1–182 (MSERLVTSNE…LGVLCSMEYY (182 aa)). Residues leucine 21, arginine 22, glycine 63, lysine 66, threonine 67, threonine 68, 129–131 (EDY), arginine 172, tyrosine 182, and arginine 219 each bind ATP. Residue threonine 67 participates in Mg(2+) binding. The segment at 183–253 (TDEQLKEIII…AAKKSLEILE (71 aa)) is small ATPAse domain (RuvB-S). A head domain (RuvB-H) region spans residues 256-346 (GEGFDRIDNK…DSKQCTLFEK (91 aa)). The DNA site is built by arginine 311 and arginine 316.

It belongs to the RuvB family. Homohexamer. Forms an RuvA(8)-RuvB(12)-Holliday junction (HJ) complex. HJ DNA is sandwiched between 2 RuvA tetramers; dsDNA enters through RuvA and exits via RuvB. An RuvB hexamer assembles on each DNA strand where it exits the tetramer. Each RuvB hexamer is contacted by two RuvA subunits (via domain III) on 2 adjacent RuvB subunits; this complex drives branch migration. In the full resolvosome a probable DNA-RuvA(4)-RuvB(12)-RuvC(2) complex forms which resolves the HJ.

It is found in the cytoplasm. The enzyme catalyses ATP + H2O = ADP + phosphate + H(+). In terms of biological role, the RuvA-RuvB-RuvC complex processes Holliday junction (HJ) DNA during genetic recombination and DNA repair, while the RuvA-RuvB complex plays an important role in the rescue of blocked DNA replication forks via replication fork reversal (RFR). RuvA specifically binds to HJ cruciform DNA, conferring on it an open structure. The RuvB hexamer acts as an ATP-dependent pump, pulling dsDNA into and through the RuvAB complex. RuvB forms 2 homohexamers on either side of HJ DNA bound by 1 or 2 RuvA tetramers; 4 subunits per hexamer contact DNA at a time. Coordinated motions by a converter formed by DNA-disengaged RuvB subunits stimulates ATP hydrolysis and nucleotide exchange. Immobilization of the converter enables RuvB to convert the ATP-contained energy into a lever motion, pulling 2 nucleotides of DNA out of the RuvA tetramer per ATP hydrolyzed, thus driving DNA branch migration. The RuvB motors rotate together with the DNA substrate, which together with the progressing nucleotide cycle form the mechanistic basis for DNA recombination by continuous HJ branch migration. Branch migration allows RuvC to scan DNA until it finds its consensus sequence, where it cleaves and resolves cruciform DNA. This Clostridium perfringens (strain 13 / Type A) protein is Holliday junction branch migration complex subunit RuvB.